A 274-amino-acid polypeptide reads, in one-letter code: Triosephosphate isomerase (274 aa).

13–15 (NWK) is a substrate binding site. Catalysis depends on His98, which acts as the Electrophile. Glu170 acts as the Proton acceptor in catalysis. 2 residues coordinate substrate: Gly176 and Ser216.

This sequence belongs to the triosephosphate isomerase family. As to quaternary structure, homodimer.

Its subcellular location is the cytoplasm. The catalysed reaction is D-glyceraldehyde 3-phosphate = dihydroxyacetone phosphate. It functions in the pathway carbohydrate biosynthesis; gluconeogenesis. Its pathway is carbohydrate degradation; glycolysis; D-glyceraldehyde 3-phosphate from glycerone phosphate: step 1/1. Functionally, involved in the gluconeogenesis. Catalyzes stereospecifically the conversion of dihydroxyacetone phosphate (DHAP) to D-glyceraldehyde-3-phosphate (G3P). This chain is Triosephosphate isomerase, found in Aster yellows witches'-broom phytoplasma (strain AYWB).